The chain runs to 207 residues: Ras-related protein Rab-8B (207 aa).

Ser-17, Gly-18, Val-19, Gly-20, Lys-21, Thr-22, Cys-23, Thr-35, Ser-39, and Thr-40 together coordinate GTP. Thr-22 is a binding site for Mg(2+). 2 consecutive short sequence motifs (switch) follow at residues 31–45 (DAFN…GIDF) and 63–80 (DTAG…YYRG). 2 residues coordinate Mg(2+): Thr-40 and Asp-63. Residue Gly-66 coordinates GTP. Thr-72 carries the post-translational modification Phosphothreonine. Residues Asn-121, Lys-122, Asp-124, Ala-152, and Lys-153 each coordinate GTP. Phosphoserine occurs at positions 180 and 183. Cys-204 bears the Cysteine methyl ester mark. Cys-204 is lipidated: S-geranylgeranyl cysteine. The propeptide at 205–207 (LLL) is removed in mature form.

This sequence belongs to the small GTPase superfamily. Rab family. In terms of assembly, associated with actin, delta-catenin and alpha and beta tubulins. Interacts with OTOF. Interacts with PEX5R. Interacts with RAB3IP. Interacts with VIM. Interacts with CDH1. Interacts with MICALL2. Interacts with GDI1, GDI2, CHML and CHM; phosphorylation at Thr-72 disrupts these interactions. Interacts with MICAL1. Requires Mg(2+) as cofactor. In terms of processing, phosphorylation of Thr-72 in the switch II region by LRRK2 prevents the association of RAB regulatory proteins, including CHM, CHML and RAB GDP dissociation inhibitors GDI1 and GDI2.

The protein resides in the cell membrane. It is found in the cytoplasmic vesicle. The protein localises to the phagosome membrane. It localises to the endosome membrane. The catalysed reaction is GTP + H2O = GDP + phosphate + H(+). Its activity is regulated as follows. Regulated by guanine nucleotide exchange factors (GEFs) including RAB3IP/RABIN8 which promotes the exchange of bound GDP for free GTP. Regulated by GTPase activating proteins (GAPs) which increase the GTP hydrolysis activity. Inhibited by GDP dissociation inhibitors (GDIs). In terms of biological role, the small GTPases Rab are key regulators of intracellular membrane trafficking, from the formation of transport vesicles to their fusion with membranes. Rabs cycle between an inactive GDP-bound form and an active GTP-bound form that is able to recruit to membranes different sets of downstream effectors directly responsible for vesicle formation, movement, tethering and fusion. RAB8B may be involved in polarized vesicular trafficking and neurotransmitter release. May participate in cell junction dynamics in Sertoli cells. May also participate in the export of a subset of neosynthesized proteins through a Rab8-Rab10-Rab11-dependent endososomal export route. The sequence is that of Ras-related protein Rab-8B (RAB8B) from Bos taurus (Bovine).